A 360-amino-acid polypeptide reads, in one-letter code: TIMELESS-interacting protein (360 aa).

Disordered stretches follow at residues 1–80 (MMDP…QRLA), 178–199 (PSEDFSFPDELHVPSPSQPVKV), 220–246 (RMEKMQAQAESQALSQATQSDPNEIPD), and 289–360 (QDVS…KEEY). Positions 34–48 (ADDEAEDVANGDDWT) are enriched in acidic residues. A compositionally biased stretch (basic residues) spans 62–71 (PARRVVKRPQ). The interval 74–150 (LDGQRLASQR…KEVQTCLKKI (77 aa)) is interaction with TIMELESS. A compositionally biased stretch (low complexity) spans 225–239 (QAQAESQALSQATQS).

This sequence belongs to the CSM3 family. As to quaternary structure, interacts with timeless, which impairs timeless self-association.

The protein resides in the cytoplasm. It localises to the nucleus. Plays an important role in the control of DNA replication and the maintenance of replication fork stability. Important for cell survival after DNA damage or replication stress. May be required for the replication checkpoint induced by hydroxyurea or ultraviolet light. In Xenopus laevis (African clawed frog), this protein is TIMELESS-interacting protein (tipin).